Consider the following 427-residue polypeptide: 3-isopropylmalate dehydratase large subunit (427 aa).

Residues Cys-308, Cys-368, and Cys-371 each contribute to the [4Fe-4S] cluster site.

The protein belongs to the aconitase/IPM isomerase family. LeuC type 2 subfamily. In terms of assembly, heterodimer of LeuC and LeuD. [4Fe-4S] cluster serves as cofactor.

The enzyme catalyses (2R,3S)-3-isopropylmalate = (2S)-2-isopropylmalate. Its pathway is amino-acid biosynthesis; L-leucine biosynthesis; L-leucine from 3-methyl-2-oxobutanoate: step 2/4. In terms of biological role, catalyzes the isomerization between 2-isopropylmalate and 3-isopropylmalate, via the formation of 2-isopropylmaleate. The protein is 3-isopropylmalate dehydratase large subunit of Geobacter metallireducens (strain ATCC 53774 / DSM 7210 / GS-15).